A 613-amino-acid polypeptide reads, in one-letter code: MIEVLLVTICFTVFPYQGSPIILESGNVNDYEVVYPQKVPALPKGGVQNPQPETKYEDTMQYEFHVNGEPVVLHLERNKGLFSEDYTETHYAPDGREITTSPPVQDHCYYHGYIQNEADSSAAISACDGLKGHFKHRGETYFIEPLKLSNSESHAIYKDEHVEKEDEIPKICGVTQTTSESDETIEKISQLTNTPEQDRYLQVKKYIELYVVVDNRMYRNYNSNRDAINERVYEMVNTLNVMYRPLNFFIALIGLEIWSNQDEINIEPEVAVTLRSFGEWRNTTLLPRKRNDNAQLLTGIDFNGATVGLAYVGTLCRPTQSVAVIQDHSKRTSMVASTMAHELGHNLGINHDSASCNCNAGPCIMSATISNQPLSEFSSCSVQEHQRYLLRVRPQCILNKPLRKDIVTPPVCGNYFVERGEECDCGSPQDCQSACCNATTCKLQHEAQCDSGECCEQCKFKKAGAECRAAKDDCDLPESCTGQSAKCPTDSFQRNGHPCQNNQGYCYNGKCLIMTNQCIALKGPGVNVSPDECFTLKQNDPECGFCRIENGTKIPCAEKDKMCGKLLCQEGNATCICFPTTDDPDYGMVEPGTKCGDGKVCINRQCVDVQTAY.

Residues 1 to 20 (MIEVLLVTICFTVFPYQGSP) form the signal peptide. Positions 21–191 (IILESGNVND…DETIEKISQL (171 aa)) are excised as a propeptide. Residues 205-401 (KYIELYVVVD…VRPQCILNKP (197 aa)) enclose the Peptidase M12B domain. E208 contacts Ca(2+). N-linked (GlcNAc...) asparagine glycosylation is present at N282. D292 lines the Ca(2+) pocket. 3 disulfides stabilise this stretch: C316–C396, C356–C380, and C358–C363. Residues H341, H345, and H351 each coordinate Zn(2+). Ca(2+)-binding residues include C396, N399, N414, F416, E418, E421, and D424. Positions 409-495 (PPVCGNYFVE…KCPTDSFQRN (87 aa)) constitute a Disintegrin domain. 15 disulfide bridges follow: C412/C441, C423/C436, C425/C431, C435/C458, C449/C455, C454/C480, C467/C487, C474/C506, C499/C511, C518/C568, C533/C575, C543/C577, C546/C556, C563/C601, and C595/C606. N437 carries N-linked (GlcNAc...) asparagine glycosylation. Residues 473-475 (DCD) carry the D/ECD-tripeptide motif. Positions 475, 476, 478, and 490 each coordinate Ca(2+). Residues N550 and N572 are each glycosylated (N-linked (GlcNAc...) asparagine).

Belongs to the venom metalloproteinase (M12B) family. P-III subfamily. Monomer. Zn(2+) serves as cofactor. As to expression, expressed by the venom gland.

The protein resides in the secreted. Functionally, snake venom zinc metalloproteinase that may impair hemostasis in the prey. This is Zinc metalloproteinase-disintegrin-like MTP8 from Drysdalia coronoides (White-lipped snake).